The sequence spans 81 residues: Putative defensin-like protein 26 (81 aa).

A signal peptide spans 1 to 21 (MASLKVFSFALLIVLTFSVIG). 2 cysteine pairs are disulfide-bonded: C33-C81 and C52-C77.

The protein belongs to the DEFL family.

Its subcellular location is the secreted. The polypeptide is Putative defensin-like protein 26 (Arabidopsis thaliana (Mouse-ear cress)).